A 327-amino-acid chain; its full sequence is Ribosomal RNA small subunit methyltransferase H (327 aa).

S-adenosyl-L-methionine contacts are provided by residues 37–39 (GGY), Asp-55, Phe-82, Asp-99, and Gln-106. A disordered region spans residues 303-327 (IATRTDAPAQPVAPETLGLPQLEGF).

It belongs to the methyltransferase superfamily. RsmH family.

The protein localises to the cytoplasm. It catalyses the reaction cytidine(1402) in 16S rRNA + S-adenosyl-L-methionine = N(4)-methylcytidine(1402) in 16S rRNA + S-adenosyl-L-homocysteine + H(+). Functionally, specifically methylates the N4 position of cytidine in position 1402 (C1402) of 16S rRNA. This chain is Ribosomal RNA small subunit methyltransferase H, found in Jannaschia sp. (strain CCS1).